Here is a 160-residue protein sequence, read N- to C-terminus: Ribosomal RNA large subunit methyltransferase H (160 aa).

2 residues coordinate S-adenosyl-L-methionine: leucine 76 and glycine 108.

It belongs to the RNA methyltransferase RlmH family. As to quaternary structure, homodimer.

Its subcellular location is the cytoplasm. The catalysed reaction is pseudouridine(1915) in 23S rRNA + S-adenosyl-L-methionine = N(3)-methylpseudouridine(1915) in 23S rRNA + S-adenosyl-L-homocysteine + H(+). Specifically methylates the pseudouridine at position 1915 (m3Psi1915) in 23S rRNA. The chain is Ribosomal RNA large subunit methyltransferase H from Bradyrhizobium diazoefficiens (strain JCM 10833 / BCRC 13528 / IAM 13628 / NBRC 14792 / USDA 110).